The primary structure comprises 73 residues: Putative defensin-like protein 33 (73 aa).

An N-terminal signal peptide occupies residues 1–25 (MASNKVSFIFILFLCVLSTAEFGEA). Disulfide bonds link C33-C59, C45-C68, and C49-C70.

The protein belongs to the DEFL family.

Its subcellular location is the secreted. This chain is Putative defensin-like protein 33, found in Arabidopsis thaliana (Mouse-ear cress).